Reading from the N-terminus, the 110-residue chain is Small ribosomal subunit protein eS25 (110 aa).

The tract at residues 1–38 is disordered; that stretch reads MGGKKKPTLSQLAKKAEKEKAQQAQKAKKEVKKEETPA. The segment covering 14–38 has biased composition (basic and acidic residues); the sequence is KKAEKEKAQQAQKAKKEVKKEETPA.

Belongs to the eukaryotic ribosomal protein eS25 family.

This chain is Small ribosomal subunit protein eS25 (rps25e), found in Pyrobaculum aerophilum (strain ATCC 51768 / DSM 7523 / JCM 9630 / CIP 104966 / NBRC 100827 / IM2).